The following is a 510-amino-acid chain: Beta-glucosidase 34 (510 aa).

Residues 1–26 (MGNGGRCMVEVVILLVLMAMSQGCDA) form the signal peptide. N28 is a glycosylation site (N-linked (GlcNAc...) asparagine). Residue Q52 participates in a beta-D-glucoside binding. Residue N120 is glycosylated (N-linked (GlcNAc...) asparagine). Residues H153 and 198–199 (NE) contribute to the a beta-D-glucoside site. Catalysis depends on E199, which acts as the Proton donor. A disulfide bridge links C218 with C226. N-linked (GlcNAc...) asparagine glycosylation is found at N279 and N331. Y342 lines the a beta-D-glucoside pocket. N360 carries N-linked (GlcNAc...) asparagine glycosylation. A beta-D-glucoside is bound by residues E415, W465, 472–473 (EW), and F481. The Nucleophile role is filled by E415.

Belongs to the glycosyl hydrolase 1 family.

It catalyses the reaction Hydrolysis of terminal, non-reducing beta-D-glucosyl residues with release of beta-D-glucose.. This is Beta-glucosidase 34 (BGLU34) from Oryza sativa subsp. japonica (Rice).